The primary structure comprises 443 residues: Deoxyguanosinetriphosphate triphosphohydrolase-like protein (443 aa).

The 186-residue stretch at 61–246 folds into the HD domain; sequence RLTHSLEVAC…MEAADDICYG (186 aa).

It belongs to the dGTPase family. Type 3 subfamily.

This chain is Deoxyguanosinetriphosphate triphosphohydrolase-like protein, found in Pseudomonas aeruginosa (strain LESB58).